The chain runs to 276 residues: NAD kinase (276 aa).

The Proton acceptor role is filled by D61. Residues 61-62 (DG), R66, 135-136 (NE), R146, H163, D165, and A200 each bind NAD(+).

The protein belongs to the NAD kinase family. Requires a divalent metal cation as cofactor.

The protein resides in the cytoplasm. It carries out the reaction NAD(+) + ATP = ADP + NADP(+) + H(+). Functionally, involved in the regulation of the intracellular balance of NAD and NADP, and is a key enzyme in the biosynthesis of NADP. Catalyzes specifically the phosphorylation on 2'-hydroxyl of the adenosine moiety of NAD to yield NADP. The sequence is that of NAD kinase from Chloroflexus aggregans (strain MD-66 / DSM 9485).